The sequence spans 262 residues: Polyamine aminopropyltransferase (262 aa).

In terms of domain architecture, PABS spans 1–249 (MWITQEITPY…DIHRAAFALP (249 aa)). Residue Asn29 coordinates S-methyl-5'-thioadenosine. Asp83 is a spermidine binding site. Catalysis depends on Asp155, which acts as the Proton acceptor.

The protein belongs to the spermidine/spermine synthase family. In terms of assembly, homodimer or homotetramer.

It localises to the cytoplasm. It catalyses the reaction S-adenosyl 3-(methylsulfanyl)propylamine + putrescine = S-methyl-5'-thioadenosine + spermidine + H(+). It functions in the pathway amine and polyamine biosynthesis; spermidine biosynthesis; spermidine from putrescine: step 1/1. Functionally, catalyzes the irreversible transfer of a propylamine group from the amino donor S-adenosylmethioninamine (decarboxy-AdoMet) to putrescine (1,4-diaminobutane) to yield spermidine. In Helicobacter pylori (strain G27), this protein is Polyamine aminopropyltransferase.